Consider the following 252-residue polypeptide: Redox-sensing transcriptional repressor Rex (252 aa).

Residues 26 to 65 (LYLRALTALSERSVPTVSSEELAAAAGVNSAKLRKDFSYL) constitute a DNA-binding region (H-T-H motif). 100–105 (GIGNLG) serves as a coordination point for NAD(+). The disordered stretch occupies residues 222–252 (EAAAEGAIPAAASKESADKGPDGDVPAVMPA).

This sequence belongs to the transcriptional regulatory Rex family. As to quaternary structure, homodimer.

The protein localises to the cytoplasm. Functionally, modulates transcription in response to changes in cellular NADH/NAD(+) redox state. The sequence is that of Redox-sensing transcriptional repressor Rex from Streptomyces avermitilis (strain ATCC 31267 / DSM 46492 / JCM 5070 / NBRC 14893 / NCIMB 12804 / NRRL 8165 / MA-4680).